The sequence spans 647 residues: Methyl-accepting chemotaxis protein McpK (647 aa).

Residues 1 to 16 (MYDWWVLQLAKLSVSR) are Cytoplasmic-facing. Residues 17 to 37 (KLMVGFGVLLALLLLVVISSN) form a helical membrane-spanning segment. Over 38 to 291 (RTLTHQTALS…LRESTASRDR (254 aa)) the chain is Periplasmic. An HBM domain is found at 45-287 (ALSEQLAEVA…AGRQLRESTA (243 aa)). Residues 292-312 (ASLWLIAALALAFGCVAGWAI) traverse the membrane as a helical segment. The Cytoplasmic portion of the chain corresponds to 313 to 647 (NRQIVRPLDE…LQAQVGRFRL (335 aa)). The region spanning 314 to 370 (RQIVRPLDEALAQAEAIAAGDLGKRPQNPLTLQRRDELGQLQRVMQRMGDSLRELVG) is the HAMP domain. The Methyl-accepting transducer domain maps to 375-611 (GVSQLASSAE…EINRSVLSVR (237 aa)).

Belongs to the methyl-accepting chemotaxis (MCP) protein family. Ligand free ligand-binding domain (LBD) is present in a monomer-dimer equilibrium. AlphaKG binding stabilizes the homodimer.

It is found in the cell inner membrane. In terms of biological role, chemotactic-signal transducers respond to changes in the concentration of attractants and repellents in the environment, transduce a signal from the outside to the inside of the cell, and facilitate sensory adaptation through the variation of the level of methylation. McpK is a chemoreceptor that specifically binds and mediates chemotaxis to alpha-ketoglutarate (alphaKG). This is Methyl-accepting chemotaxis protein McpK from Pseudomonas aeruginosa (strain ATCC 15692 / DSM 22644 / CIP 104116 / JCM 14847 / LMG 12228 / 1C / PRS 101 / PAO1).